Reading from the N-terminus, the 237-residue chain is Necrosis-inducing protein NPP1 (237 aa).

The signal sequence occupies residues Met-1 to Ala-19. Asn-67 carries an N-linked (GlcNAc...) asparagine glycan. The Conserved undecapeptide motif motif lies at Ala-103–Asp-113. Residues Gly-120–Glu-126 carry the Conserved heptapetpide motif motif.

This sequence belongs to the Necrosis inducing protein (NPP1) family.

It localises to the secreted. Secreted effector that acts as a pathogen-associated molecular pattern (PAMP) recognized by the plant immune system. Induces necrotic cell death and ethylene biosynthesis in parsley. Stimulates early induced host cellular responses implicated in elicitor signal transmission such as increased levels of cytoplasmic calcium, production of reactive oxygen species (ROS), and MAP kinase activation. Infiltration of NPP1 into leaves of Arabidopsis thaliana results in transcript accumulation of pathogenesis-related (PR) genes, production of ROS and ethylene, callose apposition, and hypersensitive response (HR)-like cell death. NPP1-mediated induction of the PR1 gene is salicylic acid-dependent, and requires both functional NDR1 and PAD4. This Phytophthora nicotianae (Potato buckeye rot agent) protein is Necrosis-inducing protein NPP1.